The chain runs to 433 residues: O-methyltransferase aclM (433 aa).

A coiled-coil region spans residues 5-37; it reads LTDAERTALQTSLEALNRQVEATRNILRSNSQK. S-adenosyl-L-methionine contacts are provided by residues aspartate 277 and 311–313; that span reads GDF. Histidine 330 serves as the catalytic Proton acceptor.

This sequence belongs to the class I-like SAM-binding methyltransferase superfamily. Cation-independent O-methyltransferase family. COMT subfamily.

It participates in mycotoxin biosynthesis. O-methyltransferase; part of the gene cluster that mediates the biosynthesis of aspirochlorine (or antibiotic A30641), an unusual halogenated spiro compound with distinctive antifungal properties due to selective inhibition of protein biosynthesis, and which is also active against bacteria, viruses, and murine tumor cells. The non-ribosomal peptide synthetase (NRPS) aclP is responsible the formation of the diketopiperazine (DKP) core from the condensation of 2 phenylalanine residues. One Phe residue is tailored into chlorotyrosine by hydroxylation and chlorination, whereas the second Phe undergoes an unprecedented C-C bond cleavage to be converted into glycine. After formation of the DKP, sulfur is incorporated into the DKP by conjugation with glutathione by aclG, followed by its stepwise degradation to the thiol by aclI, aclJ and aclK, and the dithiol oxidation by aclT. In addition, oxygenases (aclB, aclC, aclL and aclO) and O-methyltransferases (aclM and aclU) act as tailoring enzymes to produce the intermediate dechloroaspirochlorine. Ultimately, chlorination of dechloroaspirochlorine by the halogenase aclH is the last step in the aspirochlorine pathway. This Aspergillus oryzae (strain ATCC 42149 / RIB 40) (Yellow koji mold) protein is O-methyltransferase aclM.